Reading from the N-terminus, the 816-residue chain is uncharacterized protein (816 aa).

503 to 534 (DTWTVITGGTDGIGKAYIEELCKTRGLKKFYL) serves as a coordination point for NADP(+). Serine 641 is a substrate binding site. Residue tyrosine 661 is the Proton acceptor of the active site. 2 consecutive transmembrane segments (helical) span residues 743–763 (FGFS…SIVL) and 777–797 (VFII…FLLN).

It belongs to the short-chain dehydrogenases/reductases (SDR) family.

It localises to the membrane. This is an uncharacterized protein from Caenorhabditis elegans.